The chain runs to 285 residues: Putative ankyrin repeat protein R551 (285 aa).

4 ANK repeats span residues Asp99–Ile129, Asn157–Glu186, Ile188–Arg214, and Ser215–Gln249.

This chain is Putative ankyrin repeat protein R551, found in Acanthamoeba polyphaga (Amoeba).